The chain runs to 161 residues: Probable chemoreceptor glutamine deamidase CheD (161 aa).

Belongs to the CheD family.

It carries out the reaction L-glutaminyl-[protein] + H2O = L-glutamyl-[protein] + NH4(+). In terms of biological role, probably deamidates glutamine residues to glutamate on methyl-accepting chemotaxis receptors (MCPs), playing an important role in chemotaxis. In Trichlorobacter lovleyi (strain ATCC BAA-1151 / DSM 17278 / SZ) (Geobacter lovleyi), this protein is Probable chemoreceptor glutamine deamidase CheD.